Reading from the N-terminus, the 185-residue chain is NADH-quinone oxidoreductase subunit B (185 aa).

[4Fe-4S] cluster-binding residues include cysteine 64, cysteine 65, cysteine 129, and cysteine 159.

Belongs to the complex I 20 kDa subunit family. As to quaternary structure, NDH-1 is composed of 14 different subunits. Subunits NuoB, C, D, E, F, and G constitute the peripheral sector of the complex. [4Fe-4S] cluster serves as cofactor.

It is found in the cell inner membrane. The enzyme catalyses a quinone + NADH + 5 H(+)(in) = a quinol + NAD(+) + 4 H(+)(out). In terms of biological role, NDH-1 shuttles electrons from NADH, via FMN and iron-sulfur (Fe-S) centers, to quinones in the respiratory chain. Couples the redox reaction to proton translocation (for every two electrons transferred, four hydrogen ions are translocated across the cytoplasmic membrane), and thus conserves the redox energy in a proton gradient. The protein is NADH-quinone oxidoreductase subunit B of Rhodospirillum rubrum (strain ATCC 11170 / ATH 1.1.1 / DSM 467 / LMG 4362 / NCIMB 8255 / S1).